A 238-amino-acid chain; its full sequence is Probable septum site-determining protein MinC (238 aa).

Belongs to the MinC family. Interacts with MinD and FtsZ.

Cell division inhibitor that blocks the formation of polar Z ring septums. Rapidly oscillates between the poles of the cell to destabilize FtsZ filaments that have formed before they mature into polar Z rings. Prevents FtsZ polymerization. The protein is Probable septum site-determining protein MinC of Xylella fastidiosa (strain M23).